Here is a 116-residue protein sequence, read N- to C-terminus: uncharacterized protein (116 aa).

The next 3 helical transmembrane spans lie at 5 to 27 (AILL…AVPC), 42 to 64 (PFVP…TAGV), and 88 to 110 (VLHG…VVAI).

It localises to the cell membrane. This is an uncharacterized protein from Archaeoglobus fulgidus (strain ATCC 49558 / DSM 4304 / JCM 9628 / NBRC 100126 / VC-16).